Here is a 560-residue protein sequence, read N- to C-terminus: MGDNLKKRSSMTTDGDNRAPNRAMLRAVGFTDEDFHKPMIGIASTWSEITPCNIHINKLAEKVKEGVREAGGVPQIYGTITVSDGIMMGHEGMHFSLPSREVIADSIEIVSNAMRHDGVIAIGGCDKNMPGCLMALCRIDAPSIFVYGGTILPGNCDGQDVDIVSIFEAVGKFNAGKISREEFIRIEQNAIPGAGSCGGMYTANTMSSAIEALGMSLPGSASMPAVSSRKANDCYEAGKALINLIQKGITPKQILTKKAFENAITVVLVLGGSTNAVLHLIAIAKEIGVGLTLDDFDRISKKTPHLADLKPGGKYAMTDLDKVGGVHGVMKYLLKEGMLHGDCLTVTGKTIAENLKDMPDLVPNQTIVRKKSEALHPSGPLVILKGNLAPDGAVAKISGLKKISITGPAKVFESEDDCFNAIMTDKIKPGDVIIIRYEGPKGGPGMREMLAVTSALVGKGLGEDVGLMTDGRFSGGTHGLVVGHISPEAFDGGPIAIIQNGDKVTIDSSKNLLQVEISQEEIDKRLKSWKPIEPRYKTGVLAKYVKLVQSATNGAITNLL.

The tract at residues 1 to 20 (MGDNLKKRSSMTTDGDNRAP) is disordered. Cys-52 provides a ligand contact to [2Fe-2S] cluster. Asp-84 contacts Mg(2+). Cys-125 serves as a coordination point for [2Fe-2S] cluster. Mg(2+) is bound by residues Asp-126 and Lys-127. Position 127 is an N6-carboxylysine (Lys-127). Residue Cys-197 coordinates [2Fe-2S] cluster. Residue Glu-448 participates in Mg(2+) binding. Ser-474 (proton acceptor) is an active-site residue.

It belongs to the IlvD/Edd family. In terms of assembly, homodimer. Requires [2Fe-2S] cluster as cofactor. Mg(2+) is required as a cofactor.

It catalyses the reaction (2R)-2,3-dihydroxy-3-methylbutanoate = 3-methyl-2-oxobutanoate + H2O. The enzyme catalyses (2R,3R)-2,3-dihydroxy-3-methylpentanoate = (S)-3-methyl-2-oxopentanoate + H2O. It participates in amino-acid biosynthesis; L-isoleucine biosynthesis; L-isoleucine from 2-oxobutanoate: step 3/4. Its pathway is amino-acid biosynthesis; L-valine biosynthesis; L-valine from pyruvate: step 3/4. Functions in the biosynthesis of branched-chain amino acids. Catalyzes the dehydration of (2R,3R)-2,3-dihydroxy-3-methylpentanoate (2,3-dihydroxy-3-methylvalerate) into 2-oxo-3-methylpentanoate (2-oxo-3-methylvalerate) and of (2R)-2,3-dihydroxy-3-methylbutanoate (2,3-dihydroxyisovalerate) into 2-oxo-3-methylbutanoate (2-oxoisovalerate), the penultimate precursor to L-isoleucine and L-valine, respectively. This Leptospira interrogans serogroup Icterohaemorrhagiae serovar copenhageni (strain Fiocruz L1-130) protein is Dihydroxy-acid dehydratase.